Consider the following 357-residue polypeptide: GTPase Obg (357 aa).

Residues 1–158 (MFVDNIKLKV…LEIVLELKLI (158 aa)) form the Obg domain. The OBG-type G domain maps to 159-345 (ADVGLVGFPN…LKFALFDLVE (187 aa)). Residues 165–172 (GFPNAGKS), 190–194 (FTTLT), 212–215 (DIPG), 280–283 (TKCD), and 326–328 (SSV) each bind GTP. Mg(2+) is bound by residues Ser172 and Thr192.

This sequence belongs to the TRAFAC class OBG-HflX-like GTPase superfamily. OBG GTPase family. In terms of assembly, monomer. Mg(2+) is required as a cofactor.

Its subcellular location is the cytoplasm. Functionally, an essential GTPase which binds GTP, GDP and possibly (p)ppGpp with moderate affinity, with high nucleotide exchange rates and a fairly low GTP hydrolysis rate. Plays a role in control of the cell cycle, stress response, ribosome biogenesis and in those bacteria that undergo differentiation, in morphogenesis control. The protein is GTPase Obg of Nautilia profundicola (strain ATCC BAA-1463 / DSM 18972 / AmH).